The following is a 120-amino-acid chain: Large ribosomal subunit protein uL18 (120 aa).

This sequence belongs to the universal ribosomal protein uL18 family. Part of the 50S ribosomal subunit; part of the 5S rRNA/L5/L18/L25 subcomplex. Contacts the 5S and 23S rRNAs.

This is one of the proteins that bind and probably mediate the attachment of the 5S RNA into the large ribosomal subunit, where it forms part of the central protuberance. The sequence is that of Large ribosomal subunit protein uL18 from Acidiphilium cryptum (strain JF-5).